Here is a 1303-residue protein sequence, read N- to C-terminus: Ninein-like protein (1303 aa).

EF-hand domains lie at 8–43 (RYVA…LSLD) and 61–77 (RVNF…VLSR). Residues 107–135 (TKRYGRRSRPDKTDLELTADSDSLPFGTD) are disordered. 2 EF-hand domains span residues 203-238 (VTDG…IGLK) and 240-275 (LEAE…PHDH). The Ca(2+) site is built by Asp253, Asp255, Asp257, Lys259, and Glu264. Residues 464 to 590 (EYESEVLLEQ…CSELELLKSQ (127 aa)) are a coiled coil. Residues 592 to 617 (SGKRTRLSRSSLPANDWSNRRALTTE) are compositionally biased toward polar residues. The disordered stretch occupies residues 592–634 (SGKRTRLSRSSLPANDWSNRRALTTESDSDDPEMKKGTSPQVR). 3 coiled-coil regions span residues 660–791 (ELAM…LEAE), 821–876 (LAVL…LSAR), and 919–1146 (SKQL…VQAQ). A disordered region spans residues 1156-1181 (EQMGSGTQEHASHLQTQLAEQQRRTQ). The span at 1159–1175 (GSGTQEHASHLQTQLAE) shows a compositional bias: polar residues. The stretch at 1202–1278 (QEQYEKLMAS…EQRQKSAEKK (77 aa)) forms a coiled coil.

The protein resides in the cytoplasm. It localises to the cytoskeleton. The protein localises to the microtubule organizing center. It is found in the centrosome. Its function is as follows. Required for the intracellular transport of organelles and vesicles, and is essential for the photoreceptor's outer segments formation, maintenance and function. This Danio rerio (Zebrafish) protein is Ninein-like protein (Ninl).